The sequence spans 96 residues: Large ribosomal subunit protein uL23 (96 aa).

This sequence belongs to the universal ribosomal protein uL23 family. As to quaternary structure, part of the 50S ribosomal subunit. Contacts protein L29, and trigger factor when it is bound to the ribosome.

Functionally, one of the early assembly proteins it binds 23S rRNA. One of the proteins that surrounds the polypeptide exit tunnel on the outside of the ribosome. Forms the main docking site for trigger factor binding to the ribosome. The protein is Large ribosomal subunit protein uL23 of Brevibacillus brevis (strain 47 / JCM 6285 / NBRC 100599).